A 310-amino-acid chain; its full sequence is Acetyl-coenzyme A carboxylase carboxyl transferase subunit alpha (310 aa).

Residues 36–286 (NLEKEITKTY…GEYILKQLDE (251 aa)) enclose the CoA carboxyltransferase C-terminal domain.

The protein belongs to the AccA family. Acetyl-CoA carboxylase is a heterohexamer composed of biotin carboxyl carrier protein (AccB), biotin carboxylase (AccC) and two subunits each of ACCase subunit alpha (AccA) and ACCase subunit beta (AccD).

The protein resides in the cytoplasm. The enzyme catalyses N(6)-carboxybiotinyl-L-lysyl-[protein] + acetyl-CoA = N(6)-biotinyl-L-lysyl-[protein] + malonyl-CoA. It functions in the pathway lipid metabolism; malonyl-CoA biosynthesis; malonyl-CoA from acetyl-CoA: step 1/1. Functionally, component of the acetyl coenzyme A carboxylase (ACC) complex. First, biotin carboxylase catalyzes the carboxylation of biotin on its carrier protein (BCCP) and then the CO(2) group is transferred by the carboxyltransferase to acetyl-CoA to form malonyl-CoA. This chain is Acetyl-coenzyme A carboxylase carboxyl transferase subunit alpha, found in Campylobacter fetus subsp. fetus (strain 82-40).